The chain runs to 215 residues: uncharacterized protein (215 aa).

Transmembrane regions (helical) follow at residues Leu3 to Ile23, Ala30 to Trp50, Leu59 to Trp79, Trp87 to Val107, Val122 to Tyr142, and Val156 to Val176.

It belongs to the major facilitator superfamily. Allantoate permease family.

It is found in the membrane. This is an uncharacterized protein from Saccharomyces cerevisiae (strain ATCC 204508 / S288c) (Baker's yeast).